We begin with the raw amino-acid sequence, 225 residues long: uncharacterized protein (225 aa).

This is an uncharacterized protein from Dictyostelium discoideum (Social amoeba).